Consider the following 277-residue polypeptide: uncharacterized protein (277 aa).

An SWIM-type zinc finger spans residues 139 to 167; the sequence is TARELSLDCSCPDYAVPCKHLAATFYLLA.

This is an uncharacterized protein from Mycobacterium tuberculosis (strain ATCC 25618 / H37Rv).